The following is a 349-amino-acid chain: MSEKKDVRILAYESSCDETSTAVIKNGREIESLIVATQIKSHQRFGGVVPEVASRHHIEVVSQITKEALNEANCSWKDIDAIAVTYGPGLVGALLIGVSAAKAVSMATGIPLIGVDHIMGHIMAAQLKDEIEYPAIALQVSGGHTEIVLLKDPTHFEIIGDTRDDAAGEAYDKIGRVLGVNYPAGKTIDAWAHQGKDTFNFPRAMLEDDDYDFSFSGLKSAFINTCHHADQIHEKLNKYDLAASFQAAVIDVLAHKTIRAIKEYKPKTFIMGGGVAANQGLRDRMSEEIAKLPKADQPKVILPDLKLCGDNAAMIGAAAYNLYNGGQFADLTLNADPSLELPYAKSMLN.

The Fe cation site is built by His-117 and His-121. Substrate is bound by residues 139-143, Asp-172, Gly-185, Asp-189, and Asn-278; that span reads QVSGG. Asp-310 provides a ligand contact to Fe cation.

Belongs to the KAE1 / TsaD family. Fe(2+) is required as a cofactor.

Its subcellular location is the cytoplasm. It catalyses the reaction L-threonylcarbamoyladenylate + adenosine(37) in tRNA = N(6)-L-threonylcarbamoyladenosine(37) in tRNA + AMP + H(+). Functionally, required for the formation of a threonylcarbamoyl group on adenosine at position 37 (t(6)A37) in tRNAs that read codons beginning with adenine. Is involved in the transfer of the threonylcarbamoyl moiety of threonylcarbamoyl-AMP (TC-AMP) to the N6 group of A37, together with TsaE and TsaB. TsaD likely plays a direct catalytic role in this reaction. In Lactobacillus acidophilus (strain ATCC 700396 / NCK56 / N2 / NCFM), this protein is tRNA N6-adenosine threonylcarbamoyltransferase.